Consider the following 351-residue polypeptide: Nicotinate-nucleotide--dimethylbenzimidazole phosphoribosyltransferase (351 aa).

Glu-317 acts as the Proton acceptor in catalysis.

The protein belongs to the CobT family.

The enzyme catalyses 5,6-dimethylbenzimidazole + nicotinate beta-D-ribonucleotide = alpha-ribazole 5'-phosphate + nicotinate + H(+). It participates in nucleoside biosynthesis; alpha-ribazole biosynthesis; alpha-ribazole from 5,6-dimethylbenzimidazole: step 1/2. Functionally, catalyzes the synthesis of alpha-ribazole-5'-phosphate from nicotinate mononucleotide (NAMN) and 5,6-dimethylbenzimidazole (DMB). The sequence is that of Nicotinate-nucleotide--dimethylbenzimidazole phosphoribosyltransferase from Pseudomonas fluorescens (strain SBW25).